A 1907-amino-acid polypeptide reads, in one-letter code: Receptor-type tyrosine-protein phosphatase S (1907 aa).

Residues 1-29 (MAPTWSPSVVSVVGPVGLFLVLLARGCLA) form the signal peptide. Residues 30 to 1257 (EEPPRFIREP…PQPIVDGEEG (1228 aa)) are Extracellular-facing. Ig-like C2-type domains lie at 33 to 123 (PRFI…AKLT), 135 to 224 (PNID…ANLY), and 232 to 314 (PRFS…AQIT). Intrachain disulfides connect Cys54/Cys107 and Cys156/Cys207. An important for binding to glycosaminoglycan chains region spans residues 68–72 (KKGKK). Asn250 and Asn295 each carry an N-linked (GlcNAc...) asparagine glycan. Cys253 and Cys298 are disulfide-bonded. Fibronectin type-III domains lie at 321–411 (APGT…TGEQ), 416–510 (APRN…TQQG), 514–603 (QPMN…TLQA), 608–705 (PPQD…TDED), 710–809 (PPRK…TKGA), 810–906 (VLGR…APRG), 907–1008 (FPQI…LARD), and 1011–1095 (SPKN…TAFN). A compositionally biased stretch (low complexity) spans 691 to 700 (PGPESSPVVV). The interval 691–711 (PGPESSPVVVRTDEDVPSAPP) is disordered. The N-linked (GlcNAc...) asparagine glycan is linked to Asn720. Asn916 carries an N-linked (GlcNAc...) asparagine glycan. The helical transmembrane segment at 1258–1278 (LIWVIGPVLAVVFIICIVIAI) threads the bilayer. Over 1279–1907 (LLYKNKPDSK…YLGSFDHYAT (629 aa)) the chain is Cytoplasmic. Residues 1286–1296 (DSKRKDSEPRT) show a composition bias toward basic and acidic residues. Residues 1286–1313 (DSKRKDSEPRTKCLLNNADLAPHHPKDP) form a disordered region. 2 Tyrosine-protein phosphatase domains span residues 1352–1607 (LSQE…LLEA) and 1639–1898 (MELE…ALEY). Substrate contacts are provided by residues Asp1516, 1548-1554 (CSAGVGR), and Gln1592. The active-site Phosphocysteine intermediate is Cys1548. Cys1839 functions as the Phosphocysteine intermediate in the catalytic mechanism.

This sequence belongs to the protein-tyrosine phosphatase family. Receptor class 2A subfamily. As to quaternary structure, binding to large heparan sulfate proteoglycan structures promotes oligomerization. Binding to chondroitin sulfate proteoglycan does not lead to oligomerization. Interacts (via Ig-like domains) with NTRK3. Interacts (via Ig-like domains) with NTRK1, but does not form detectable complexes with NTRK2. Interacts with PPFIA1, PPFIA2 and PPFIA3. A cleavage occurs, separating the extracellular domain from the transmembrane segment. This process called 'ectodomain shedding' is thought to be involved in receptor desensitization, signal transduction and/or membrane localization. In terms of tissue distribution, detected in brain cortex, cerebellum and thoracic spinal cord (at protein level). Detected in motor cortex and white matter of the spinal cord, but not in spinal cord gray matter. Isoform 1 and isoform 6 are predominantly expressed in the brain (cerebrum and cerebellum) and to a lesser extent in the heart and skeletal muscle. Also found in neuronal-derived cell lines. Detected in the ganglion cell layer of the retina and in glial cells along the optic nerve. Detected in bone marrow and spleen plasmacytoid dendritic cells.

It localises to the cell membrane. The protein localises to the cell projection. Its subcellular location is the axon. It is found in the perikaryon. The protein resides in the cytoplasmic vesicle. It localises to the secretory vesicle. The protein localises to the synaptic vesicle membrane. Its subcellular location is the synapse. It is found in the synaptosome. The protein resides in the postsynaptic density. It localises to the neuron projection. The protein localises to the growth cone. It carries out the reaction O-phospho-L-tyrosyl-[protein] + H2O = L-tyrosyl-[protein] + phosphate. Its function is as follows. Cell surface receptor that binds to glycosaminoglycans, including chondroitin sulfate proteoglycans and heparan sulfate proteoglycans. Binding to chondroitin sulfate and heparan sulfate proteoglycans has opposite effects on PTPRS oligomerization and regulation of neurite outgrowth. Contributes to the inhibition of neurite and axonal outgrowth by chondroitin sulfate proteoglycans, also after nerve transection. Plays a role in stimulating neurite outgrowth in response to the heparan sulfate proteoglycan GPC2. Required for normal brain development, especially for normal development of the pituitary gland and the olfactory bulb. Functions as a tyrosine phosphatase. Mediates dephosphorylation of NTRK1, NTRK2 and NTRK3. Plays a role in down-regulation of signaling cascades that lead to the activation of Akt and MAP kinases. Down-regulates TLR9-mediated activation of NF-kappa-B, as well as production of TNF, interferon alpha and interferon beta. This is Receptor-type tyrosine-protein phosphatase S (Ptprs) from Mus musculus (Mouse).